Reading from the N-terminus, the 182-residue chain is Small ribosomal subunit protein uS4c (182 aa).

An S4 RNA-binding domain is found at 82 to 143; that stretch reads MRLDNILFRL…KERSKVLIQN (62 aa).

The protein belongs to the universal ribosomal protein uS4 family. As to quaternary structure, part of the 30S ribosomal subunit. Contacts protein S5. The interaction surface between S4 and S5 is involved in control of translational fidelity.

It localises to the plastid. The protein localises to the chloroplast. Functionally, one of the primary rRNA binding proteins, it binds directly to 16S rRNA where it nucleates assembly of the body of the 30S subunit. Its function is as follows. With S5 and S12 plays an important role in translational accuracy. The sequence is that of Small ribosomal subunit protein uS4c (rps4) from Alophia veracruzana (Mexican pine woods lily).